The sequence spans 431 residues: Extensin-3 (431 aa).

The signal sequence occupies residues 1 to 27 (MGSPMASLVATLLVLTISLTFVSQSTA). A run of 3 repeats spans residues 33–41 (SPPPPVKHY), 49–55 (SPPPVYH), and 56–63 (SPPPPKKH). The 13 X 9 AA repeats of S-P-P-P-P-V-K-H-Y stretch occupies residues 33 to 384 (SPPPPVKHYT…KSPPPPVKHY (352 aa)). Residues 42-408 (TPPVKHYSPP…KYVYKSPPPP (367 aa)) are disordered. The span at 49-59 (SPPPVYHSPPP) shows a compositional bias: pro residues. The interval 49–391 (SPPPVYHSPP…KHYSPPPVYH (343 aa)) is 13 X 7 AA repeats of S-P-P-P-V-Y-H. The interval 56–371 (SPPPPKKHYE…YHSPPPPKKH (316 aa)) is 12 X 8 AA repeats of S-P-P-P-P-K-K-H. An isodityrosine cross-linking region spans residues 64–67 (YEYK). 3 consecutive repeat copies span residues 68–76 (SPPPPVKHY), 77–83 (SPPPVYH), and 84–91 (SPPPPKKH). Residues 68–87 (SPPPPVKHYSPPPVYHSPPP) show a composition bias toward pro residues. Residues 92–95 (YVYK) form an isodityrosine cross-linking region. 3 repeat units span residues 96–104 (SPPPPVKHY), 105–111 (SPPPVYH), and 112–119 (SPPPPKKH). Residues 96–115 (SPPPPVKHYSPPPVYHSPPP) are compositionally biased toward pro residues. Residues 120–123 (YVYK) are isodityrosine cross-linking. Tandem repeats lie at residues 124-132 (SPPPPVKHY), 133-139 (SPPPVYH), and 140-147 (SPPPPKKH). The segment covering 124–143 (SPPPPVKHYSPPPVYHSPPP) has biased composition (pro residues). The tract at residues 148 to 151 (YVYK) is isodityrosine cross-linking. 3 tandem repeats follow at residues 152–160 (SPPPPVKHY), 161–167 (SPPPVYH), and 168–175 (SPPPPKKH). The span at 152–171 (SPPPPVKHYSPPPVYHSPPP) shows a compositional bias: pro residues. Residues 176–179 (YVYK) are isodityrosine cross-linking. 3 consecutive repeat copies span residues 180–188 (SPPPPVKHY), 189–195 (SPPPVYH), and 196–203 (SPPPPKKH). Residues 180 to 199 (SPPPPVKHYSPPPVYHSPPP) show a composition bias toward pro residues. The interval 204-207 (YVYK) is isodityrosine cross-linking. 3 consecutive repeat copies span residues 208-216 (SPPPPVKHY), 217-223 (SPPPVYH), and 224-231 (SPPPPKKH). Positions 208-227 (SPPPPVKHYSPPPVYHSPPP) are enriched in pro residues. The isodityrosine cross-linking stretch occupies residues 232 to 235 (YVYK). Tandem repeats lie at residues 236-244 (SPPPPVKHY), 245-251 (SPPPVYH), and 252-259 (SPPPPKKH). Residues 236 to 255 (SPPPPVKHYSPPPVYHSPPP) show a composition bias toward pro residues. Positions 260-263 (YVYK) are isodityrosine cross-linking. 3 consecutive repeat copies span residues 264 to 272 (SPPPPVKHY), 273 to 279 (SPPPVYH), and 280 to 287 (SPPPPKKH). The span at 264 to 283 (SPPPPVKHYSPPPVYHSPPP) shows a compositional bias: pro residues. Residues 288–291 (YVYK) are isodityrosine cross-linking. 3 consecutive repeat copies span residues 292–300 (SPPPPVKHY), 301–307 (SPPPVYH), and 308–315 (SPPPPKKH). Pro residues predominate over residues 292–311 (SPPPPVKHYSPPPVYHSPPP). The isodityrosine cross-linking stretch occupies residues 316–319 (YVYK). 3 repeat units span residues 320 to 328 (SPPPPVKHY), 329 to 335 (SPPPVYH), and 336 to 343 (SPPPPKKH). The span at 320–339 (SPPPPVKHYSPPPVYHSPPP) shows a compositional bias: pro residues. The tract at residues 344-347 (YVYK) is isodityrosine cross-linking. 3 repeat units span residues 348-356 (SPPPPVKHY), 357-363 (SPPPVYH), and 364-371 (SPPPPKKH). Residues 348–367 (SPPPPVKHYSPPPVYHSPPP) show a composition bias toward pro residues. The interval 372-375 (YVYK) is isodityrosine cross-linking. Tandem repeats lie at residues 376 to 384 (SPPPPVKHY) and 385 to 391 (SPPPVYH). Positions 376-395 (SPPPPVKHYSPPPVYHSPPP) are enriched in pro residues. 2 isodityrosine cross-linking regions span residues 400–403 (YVYK) and 420–423 (YLYK).

Belongs to the extensin family. The proline residues of the Ser-Pro(3) repeats are hydroxylated and then O-glycosylated (arabinosylation) by HPAT1, HPAT2 and HPAT3. Around 20% of Hyp units are in the nonglycosylated form. The Ser residues are O-galactosylated. The lack of Ser-O-galactosylation does not affect Hyp-O-arabinosylation, but both types of O-glycosylation are central for the functionality of the protein. Correct Hyp-O-arabinosylation appears to be responsible for generating a bend on the EXT3 backbone around a YVY motif, which may represent a better scenario for Tyr intramolecular cross-links (isodityrosine type). Post-translationally, synthetised as soluble proteins which become insolubilised in the cell wall through the intermolecular cross-linking of Tyr on adjacent monomers. Isodityrosine (IDT) stabilizes and makes rigid the part of the polypeptide where IDT functional sites are present. In terms of tissue distribution, predominantly expressed in the roots.

Its subcellular location is the secreted. The protein resides in the primary cell wall. Functionally, structural component which strengthens the primary cell wall. Forms dendritic structures indicating a propensity for self-assembly through tyrosine cross-linking. Forms intermolecular cross-links exclusively by pulcherosine (three Tyr). Scaffold formation requires an unobstructed C-terminus of EXT3. Required for the correct positioning of the cell plate during cytokinesis in cells of the developing embryo. Extensins contain a characteristic repeat of the pentapeptide Ser-Pro(4). For this particular extensin, a typical repeat of Ser-Pro(3) is found. This chain is Extensin-3, found in Arabidopsis thaliana (Mouse-ear cress).